We begin with the raw amino-acid sequence, 199 residues long: Holliday junction branch migration complex subunit RuvA (199 aa).

Residues 1 to 63 (MIASVRGEVL…EDSMTLYGFS (63 aa)) form a domain I region. The tract at residues 64–141 (DTESKDLFSL…DAVATTAGAA (78 aa)) is domain II. Positions 141–145 (ASGAV) are flexible linker. Residues 146–199 (VGSSIRDQIVEALEGLGFPIKQAEQATDSVLAESPEATTSVALRSALSLLGKTR) form a domain III region.

Belongs to the RuvA family. Homotetramer. Forms an RuvA(8)-RuvB(12)-Holliday junction (HJ) complex. HJ DNA is sandwiched between 2 RuvA tetramers; dsDNA enters through RuvA and exits via RuvB. An RuvB hexamer assembles on each DNA strand where it exits the tetramer. Each RuvB hexamer is contacted by two RuvA subunits (via domain III) on 2 adjacent RuvB subunits; this complex drives branch migration. In the full resolvosome a probable DNA-RuvA(4)-RuvB(12)-RuvC(2) complex forms which resolves the HJ.

Its subcellular location is the cytoplasm. The RuvA-RuvB-RuvC complex processes Holliday junction (HJ) DNA during genetic recombination and DNA repair, while the RuvA-RuvB complex plays an important role in the rescue of blocked DNA replication forks via replication fork reversal (RFR). RuvA specifically binds to HJ cruciform DNA, conferring on it an open structure. The RuvB hexamer acts as an ATP-dependent pump, pulling dsDNA into and through the RuvAB complex. HJ branch migration allows RuvC to scan DNA until it finds its consensus sequence, where it cleaves and resolves the cruciform DNA. The protein is Holliday junction branch migration complex subunit RuvA of Rhodococcus erythropolis (strain PR4 / NBRC 100887).